A 425-amino-acid polypeptide reads, in one-letter code: MDDRKLAFFTAIEDQGGVIVKGRTRFERLFHIGRSSVPLCVDALKAAVQEAKAGSDILRYQMAVNSLFQAAPNEPEALLDKAWMESKEKENRDTTAHLQAELQGYKNNLIKESIRMGNEDLGKHFEAIGDVEAAMDSFWKMRTEVSSTEQLVDLGKLLVRVAIERRDWKSIGNHLKPLNSVNDSDPKAKALKTYSKIANGIAALGQERYKEAAFCFVEASSGVPPEIYNQIASPNDVAIYGGLLALATMDRHELQANLLDNDSFREFLQREPHIRRAITQFVNGRYAACIEILESYRPDYLLDIYLQKHVPKLYADIRTKSIVQYLKPFSCVRLDTMQKAFNGPGPSIEDELFTMIKDGKLNARIDAINKSKALQTLENYEKQALDRIRRMNIMAADLEVKGSRKPGGMNDIPFSMTTDDTVSLA.

The PCI domain maps to 219 to 379 (ASSGVPPEIY…KSKALQTLEN (161 aa)).

The protein belongs to the CSN1 family. Component of the COP9 signalosome (CSN) complex.

It is found in the cytoplasm. The protein resides in the nucleus. Component of the COP9 signalosome (CSN) complex that acts as an regulator of the ubiquitin (Ubl) conjugation pathway by mediating the deneddylation of the cullin subunit of SCF-type E3 ubiquitin-protein ligase complexes. The CSN complex is involved in the regulation of the circadian clock through its control of the stability of the SCF(FWD-1) complex. The chain is COP9 signalosome complex subunit 1 (csn-1) from Neurospora crassa (strain ATCC 24698 / 74-OR23-1A / CBS 708.71 / DSM 1257 / FGSC 987).